The following is a 291-amino-acid chain: Proteasome subunit beta (291 aa).

A propeptide spans 1–56 (removed in mature form; by autocatalysis); it reads MTRSFPDRLPTNLAFPGISVINQSSFVDLLRRQAPELLPVSLGGGQSGGGQQLSHG. Catalysis depends on Thr-57, which acts as the Nucleophile.

The protein belongs to the peptidase T1B family. The 20S proteasome core is composed of 14 alpha and 14 beta subunits that assemble into four stacked heptameric rings, resulting in a barrel-shaped structure. The two inner rings, each composed of seven catalytic beta subunits, are sandwiched by two outer rings, each composed of seven alpha subunits. The catalytic chamber with the active sites is on the inside of the barrel. Has a gated structure, the ends of the cylinder being occluded by the N-termini of the alpha-subunits. Is capped by the proteasome-associated ATPase, ARC.

The protein resides in the cytoplasm. It carries out the reaction Cleavage of peptide bonds with very broad specificity.. Its pathway is protein degradation; proteasomal Pup-dependent pathway. Its activity is regulated as follows. The formation of the proteasomal ATPase ARC-20S proteasome complex, likely via the docking of the C-termini of ARC into the intersubunit pockets in the alpha-rings, may trigger opening of the gate for substrate entry. Interconversion between the open-gate and close-gate conformations leads to a dynamic regulation of the 20S proteasome proteolysis activity. Its function is as follows. Component of the proteasome core, a large protease complex with broad specificity involved in protein degradation. The protein is Proteasome subunit beta of Mycobacterium leprae (strain Br4923).